The sequence spans 223 residues: Ribose-5-phosphate isomerase A (223 aa).

Substrate is bound by residues 32–35 (TGST), 85–88 (DGAD), and 98–101 (KGGG). The active-site Proton acceptor is the E107. K125 provides a ligand contact to substrate.

The protein belongs to the ribose 5-phosphate isomerase family. As to quaternary structure, homodimer.

The catalysed reaction is aldehydo-D-ribose 5-phosphate = D-ribulose 5-phosphate. Its pathway is carbohydrate degradation; pentose phosphate pathway; D-ribose 5-phosphate from D-ribulose 5-phosphate (non-oxidative stage): step 1/1. Its function is as follows. Catalyzes the reversible conversion of ribose-5-phosphate to ribulose 5-phosphate. This Marinomonas sp. (strain MWYL1) protein is Ribose-5-phosphate isomerase A.